A 289-amino-acid polypeptide reads, in one-letter code: MSSSVTNKSLDSLTLSAVSINGPSSTASSTHSNYTTQHSNQDYFSIKPKLKVSISNEISSTRSSEIIPGNPLLFSPLDCTNSEMDEEDDFEDDEDDENLGLINPLHHKSSHGQISDYSPLTPFTEPPSASLSKPSFTSHSPVSENIDINLVIRRKSANPATYNFLIVDDNIINIKILERILFKLYPNCNIKKLQDPTKVANAIKTHKFDVVFLDIEMPEITGVDISREMRQQPVFNSVGIIAVTTRTMAHDLLVYETVGIDYTFAKPLTYNYDFVMDRIDEVIRNRIST.

The segment at 77 to 136 (LDCTNSEMDEEDDFEDDEDDENLGLINPLHHKSSHGQISDYSPLTPFTEPPSASLSKPSF) is disordered. Acidic residues predominate over residues 83–98 (EMDEEDDFEDDEDDEN). Residues 127 to 136 (PSASLSKPSF) show a composition bias toward polar residues. The Response regulatory domain maps to 163 to 281 (NFLIVDDNII…YDFVMDRIDE (119 aa)). At aspartate 214 the chain carries 4-aspartylphosphate.

Its function is as follows. Required for stress adaptation, morphogenesis and virulence. This is Stress response regulator protein 1 (SRR1) from Scheffersomyces stipitis (strain ATCC 58785 / CBS 6054 / NBRC 10063 / NRRL Y-11545) (Yeast).